The following is a 326-amino-acid chain: DNA-directed RNA polymerase subunit alpha (326 aa).

Positions 1–230 are alpha N-terminal domain (alpha-NTD); it reads MLKIEKQAKA…LHLDPFLEIG (230 aa). The tract at residues 249–326 is alpha C-terminal domain (alpha-CTD); it reads DIQVIDDKSH…YDLEKNGSPE (78 aa).

It belongs to the RNA polymerase alpha chain family. Homodimer. The RNAP catalytic core consists of 2 alpha, 1 beta, 1 beta' and 1 omega subunit. When a sigma factor is associated with the core the holoenzyme is formed, which can initiate transcription.

It carries out the reaction RNA(n) + a ribonucleoside 5'-triphosphate = RNA(n+1) + diphosphate. Its function is as follows. DNA-dependent RNA polymerase catalyzes the transcription of DNA into RNA using the four ribonucleoside triphosphates as substrates. This chain is DNA-directed RNA polymerase subunit alpha, found in Fusobacterium nucleatum subsp. nucleatum (strain ATCC 25586 / DSM 15643 / BCRC 10681 / CIP 101130 / JCM 8532 / KCTC 2640 / LMG 13131 / VPI 4355).